A 393-amino-acid chain; its full sequence is GDP-4-keto-6-deoxy-D-mannose 3-dehydratase (393 aa).

GDP-4-dehydro-alpha-D-rhamnose is bound at residue 30–33; the sequence is NMFT. Residues 53–73 form a helical membrane-spanning segment; the sequence is YSVMVSSGSTANLLMIAALFF. Residues 60–61, W92, E166, and S187 each bind pyridoxal 5'-phosphate; that span reads GS. H192 acts as the Proton donor/acceptor in catalysis. Residue H219 participates in L-glutamate binding. GDP-4-dehydro-alpha-D-rhamnose is bound at residue R223. N252 serves as a coordination point for pyridoxal 5'-phosphate. L-glutamate is bound at residue R254. E333 is a binding site for GDP-4-dehydro-alpha-D-rhamnose.

Belongs to the DegT/DnrJ/EryC1 family. Homodimer. Pyridoxal 5'-phosphate is required as a cofactor.

It is found in the cell membrane. The enzyme catalyses GDP-4-dehydro-alpha-D-rhamnose + L-glutamate = GDP-4-dehydro-3,6-dideoxy-alpha-D-mannose + 2-oxoglutarate + NH4(+). It functions in the pathway nucleotide-sugar metabolism; GDP-L-colitose biosynthesis. Its function is as follows. Involved in the biosynthesis of L-colitose, a 3,6-dideoxyhexose present in the O-antigen region of lipopolysaccharides (LPS), where it serves as an antigenic determinant and is vital for bacterial defense and survival. Catalyzes the removal of the C3'-hydroxyl group from GDP-4-keto-6-deoxy-D-mannose via a combined transamination-deoxygenation reaction. The catalysis is initiated by a transamination step in which pyridoxal 5'-phosphate (PLP) is converted to pyridoxamine 5'-phosphate (PMP) in the presence of L-glutamate. This coenzyme then forms a Schiff base with GDP-4-keto-6-deoxy-D-mannose and the resulting adduct undergoes a PMP-mediated beta-dehydration reaction to give a sugar enamine intermediate, which after tautomerization and hydrolysis to release ammonia yields GDP-4-keto-3,6-dideoxy-D-mannose as a product. The polypeptide is GDP-4-keto-6-deoxy-D-mannose 3-dehydratase (Yersinia pseudotuberculosis).